Here is a 278-residue protein sequence, read N- to C-terminus: uncharacterized protein (278 aa).

NAD(+) is bound by residues 112–113 (HI), 191–193 (VGR), and Asp-217. The active site involves Arg-193. Glu-222 is a catalytic residue. His-241 acts as the Proton donor in catalysis. 241 to 244 (HSAG) is a binding site for NAD(+).

Belongs to the D-isomer specific 2-hydroxyacid dehydrogenase family.

This is an uncharacterized protein from Streptomyces coelicolor.